We begin with the raw amino-acid sequence, 582 residues long: MITRMSQLFLRTLRDDPADAEVPSHKLLIRAGYIRPVAPGLYSWLPLGLRVLRRIEHIVREEMNAIGGQEILFPALLPRAPYEATNRWTEYGDSVFRLQDRRGNDYLLGPTHEELFTLTVKGEYSSYKDFPVLLYQIQNKYRDEARPRAGILRVREFVMKDSYSFDIDDAGLKAAYHAHREAYQRIFARLQVRYVIVSAVSGAMGGSASEEFLAESPVGEDTFVRCLESGYAANVEAVITARPDPQPVEGLPEAVVHDTGDTPTIATLVDWANRAGLGRAVTAADTLKNVLLKVRQPGGDWELLAIGLPGDREVDDKRLGAALEPAEYVLLDDADFARYPFLVKGYIGPKALKDNGVRYLVDPRVVDGTSWITGADEPGRHVVGLVAGRDFTADGTIEAAEVRDGDPSPDGAGPLVSARGIEVAHIFQLGRKYTDAFTADVLGEDGKPVRLTMGSYGLGVSRMVAVIAEQHHDELGLRWPASVAPFDVHLVIANKDAQARAGATALADDLDRLGVEVLLDDRQASPGVKFKDAELLGVPWIVVVGRGWADGVVELRDRFAGQTRELATGPSLAADIAAALRG.

The protein belongs to the class-II aminoacyl-tRNA synthetase family. ProS type 1 subfamily. In terms of assembly, homodimer.

Its subcellular location is the cytoplasm. The enzyme catalyses tRNA(Pro) + L-proline + ATP = L-prolyl-tRNA(Pro) + AMP + diphosphate. In terms of biological role, catalyzes the attachment of proline to tRNA(Pro) in a two-step reaction: proline is first activated by ATP to form Pro-AMP and then transferred to the acceptor end of tRNA(Pro). As ProRS can inadvertently accommodate and process non-cognate amino acids such as alanine and cysteine, to avoid such errors it has two additional distinct editing activities against alanine. One activity is designated as 'pretransfer' editing and involves the tRNA(Pro)-independent hydrolysis of activated Ala-AMP. The other activity is designated 'posttransfer' editing and involves deacylation of mischarged Ala-tRNA(Pro). The misacylated Cys-tRNA(Pro) is not edited by ProRS. This is Proline--tRNA ligase from Mycolicibacterium paratuberculosis (strain ATCC BAA-968 / K-10) (Mycobacterium paratuberculosis).